The following is a 414-amino-acid chain: Histidine--tRNA ligase (414 aa).

Belongs to the class-II aminoacyl-tRNA synthetase family. Homodimer.

The protein localises to the cytoplasm. It catalyses the reaction tRNA(His) + L-histidine + ATP = L-histidyl-tRNA(His) + AMP + diphosphate + H(+). The sequence is that of Histidine--tRNA ligase from Ehrlichia ruminantium (strain Welgevonden).